Reading from the N-terminus, the 165-residue chain is UPF0262 protein blr1257 (165 aa).

Belongs to the UPF0262 family.

The polypeptide is UPF0262 protein blr1257 (Bradyrhizobium diazoefficiens (strain JCM 10833 / BCRC 13528 / IAM 13628 / NBRC 14792 / USDA 110)).